Consider the following 98-residue polypeptide: Hainantoxin-XVII.2 (98 aa).

A signal peptide spans 1-40; the sequence is MTTVGVSLFRRSPEKITMKIAAFLGLSFLLIASYVLICEA. The propeptide occupies 41 to 64; that stretch reads QHPGFQELLILEENMRDPENSKER. 3 cysteine pairs are disulfide-bonded: Cys66–Cys81, Cys73–Cys85, and Cys80–Cys95.

Belongs to the hainantoxin family. 17 subfamily. As to expression, expressed by the venom gland.

It localises to the secreted. Functionally, putative ion channel inhibitor. The chain is Hainantoxin-XVII.2 from Cyriopagopus hainanus (Chinese bird spider).